A 318-amino-acid chain; its full sequence is Ribosomal RNA small subunit methyltransferase A (318 aa).

Residues Asn-40, Val-42, Gly-67, Glu-88, Asp-118, and Asn-137 each contribute to the S-adenosyl-L-methionine site. Basic and acidic residues predominate over residues 295-305; that stretch reads SADRGGTDREG. The tract at residues 295–318 is disordered; sequence SADRGGTDREGTSPPTAGQGAPAR.

It belongs to the class I-like SAM-binding methyltransferase superfamily. rRNA adenine N(6)-methyltransferase family. RsmA subfamily.

The protein resides in the cytoplasm. The catalysed reaction is adenosine(1518)/adenosine(1519) in 16S rRNA + 4 S-adenosyl-L-methionine = N(6)-dimethyladenosine(1518)/N(6)-dimethyladenosine(1519) in 16S rRNA + 4 S-adenosyl-L-homocysteine + 4 H(+). In terms of biological role, specifically dimethylates two adjacent adenosines (A1518 and A1519) in the loop of a conserved hairpin near the 3'-end of 16S rRNA in the 30S particle. May play a critical role in biogenesis of 30S subunits. The protein is Ribosomal RNA small subunit methyltransferase A of Mycolicibacterium paratuberculosis (strain ATCC BAA-968 / K-10) (Mycobacterium paratuberculosis).